The primary structure comprises 272 residues: ATP synthase subunit a (272 aa).

7 helical membrane passes run 39-59 (GFWAVHVDTLGWSLFMGLIFI), 103-123 (VAPLALTIFVWVFLMNSLKWI), 124-144 (PVDYIPGLAHAMGLPYFKIVP), 152-172 (FGISLGVFLLIIFYSIKVKGV), 181-201 (FTPFNHWALIPFNLFLEIIGL), 221-241 (VVFILIALLPFYVQWGLNVPW), and 242-262 (AIFHILVIPLQAFIFMVLTVV).

Belongs to the ATPase A chain family. As to quaternary structure, F-type ATPases have 2 components, CF(1) - the catalytic core - and CF(0) - the membrane proton channel. CF(1) has five subunits: alpha(3), beta(3), gamma(1), delta(1), epsilon(1). CF(0) has three main subunits: a(1), b(2) and c(9-12). The alpha and beta chains form an alternating ring which encloses part of the gamma chain. CF(1) is attached to CF(0) by a central stalk formed by the gamma and epsilon chains, while a peripheral stalk is formed by the delta and b chains.

It is found in the cell inner membrane. Its function is as follows. Key component of the proton channel; it plays a direct role in the translocation of protons across the membrane. The polypeptide is ATP synthase subunit a (Ectopseudomonas mendocina (strain ymp) (Pseudomonas mendocina)).